Here is a 171-residue protein sequence, read N- to C-terminus: MDYFTLFGLPARYQIDTQALSLRFQDLQRQYHPDKFANGTQAQQLAAVQQSATINQAWQTLRHPLTRAEYLLSLHGFDLASEQHTVRDTAFLMEQLTLREELDDIEQSKDDARLESFIKRVQKMFDARLQQLVEQLDNAAWDTAADTVRKLRFLDKLRSSAEQLEEKLLDF.

One can recognise a J domain in the interval 2–74 (DYFTLFGLPA…LTRAEYLLSL (73 aa)).

Belongs to the HscB family. As to quaternary structure, interacts with HscA and stimulates its ATPase activity. Interacts with IscU.

Its function is as follows. Co-chaperone involved in the maturation of iron-sulfur cluster-containing proteins. Seems to help targeting proteins to be folded toward HscA. This Salmonella heidelberg (strain SL476) protein is Co-chaperone protein HscB.